Here is a 453-residue protein sequence, read N- to C-terminus: uncharacterized protein (453 aa).

Cys74, Cys80, Cys83, and Cys162 together coordinate [4Fe-4S] cluster. The S-adenosyl-L-methionine site is built by Gln286, Tyr315, Glu336, and Asp384. Cys411 functions as the Nucleophile in the catalytic mechanism.

It belongs to the class I-like SAM-binding methyltransferase superfamily. RNA M5U methyltransferase family.

This is an uncharacterized protein from Staphylococcus aureus (strain COL).